The sequence spans 294 residues: Proteasome subunit beta (294 aa).

Residues 1 to 65 (MTADRPALRT…MESGDLAPHG (65 aa)) constitute a propeptide, removed in mature form; by autocatalysis. Thr-66 (nucleophile) is an active-site residue.

Belongs to the peptidase T1B family. In terms of assembly, the 20S proteasome core is composed of 14 alpha and 14 beta subunits that assemble into four stacked heptameric rings, resulting in a barrel-shaped structure. The two inner rings, each composed of seven catalytic beta subunits, are sandwiched by two outer rings, each composed of seven alpha subunits. The catalytic chamber with the active sites is on the inside of the barrel. Has a gated structure, the ends of the cylinder being occluded by the N-termini of the alpha-subunits. Is capped by the proteasome-associated ATPase, ARC.

It is found in the cytoplasm. It catalyses the reaction Cleavage of peptide bonds with very broad specificity.. Its pathway is protein degradation; proteasomal Pup-dependent pathway. Its activity is regulated as follows. The formation of the proteasomal ATPase ARC-20S proteasome complex, likely via the docking of the C-termini of ARC into the intersubunit pockets in the alpha-rings, may trigger opening of the gate for substrate entry. Interconversion between the open-gate and close-gate conformations leads to a dynamic regulation of the 20S proteasome proteolysis activity. Functionally, component of the proteasome core, a large protease complex with broad specificity involved in protein degradation. The polypeptide is Proteasome subunit beta (Rhodococcus jostii (strain RHA1)).